The following is a 221-amino-acid chain: Dynein light chain Tctex-type 4 (221 aa).

2 disordered regions span residues 1-52 (MASR…SRRG) and 65-87 (NSLV…VPPL). A compositionally biased stretch (basic and acidic residues) spans 10 to 21 (RQEEENAKDSGR). S66 carries the post-translational modification Phosphoserine.

It belongs to the dynein light chain Tctex-type family. In terms of assembly, interacts with ENG/endoglin, TGFBR2 and TGFBR3. Interacts with PPP1CC. In terms of tissue distribution, ubiquitously expressed. Expressed in testis (at protein level).

The protein localises to the cell projection. It localises to the cilium. Its subcellular location is the flagellum. It is found in the cytoplasmic vesicle. The protein resides in the secretory vesicle. The protein localises to the acrosome. It localises to the cytoplasm. Its subcellular location is the cytoskeleton. It is found in the cilium axoneme. The protein resides in the nucleus. The protein localises to the microtubule organizing center. This is Dynein light chain Tctex-type 4 from Homo sapiens (Human).